Here is a 564-residue protein sequence, read N- to C-terminus: Ribulokinase (564 aa).

This sequence belongs to the ribulokinase family.

It carries out the reaction D-ribulose + ATP = D-ribulose 5-phosphate + ADP + H(+). The enzyme catalyses L-ribulose + ATP = L-ribulose 5-phosphate + ADP + H(+). It functions in the pathway carbohydrate degradation; L-arabinose degradation via L-ribulose; D-xylulose 5-phosphate from L-arabinose (bacterial route): step 2/3. The chain is Ribulokinase from Anoxybacillus flavithermus (strain DSM 21510 / WK1).